We begin with the raw amino-acid sequence, 305 residues long: tRNA dimethylallyltransferase (305 aa).

ATP is bound at residue 8-15 (GPTASGKT). 10 to 15 (TASGKT) is a binding site for substrate. The interval 33-36 (DSQQ) is interaction with substrate tRNA.

The protein belongs to the IPP transferase family. As to quaternary structure, monomer. Mg(2+) is required as a cofactor.

The enzyme catalyses adenosine(37) in tRNA + dimethylallyl diphosphate = N(6)-dimethylallyladenosine(37) in tRNA + diphosphate. Catalyzes the transfer of a dimethylallyl group onto the adenine at position 37 in tRNAs that read codons beginning with uridine, leading to the formation of N6-(dimethylallyl)adenosine (i(6)A). The sequence is that of tRNA dimethylallyltransferase from Anaeromyxobacter dehalogenans (strain 2CP-1 / ATCC BAA-258).